A 158-amino-acid chain; its full sequence is Endoribonuclease YbeY (158 aa).

The Zn(2+) site is built by histidine 118, histidine 122, and histidine 128.

This sequence belongs to the endoribonuclease YbeY family. Requires Zn(2+) as cofactor.

It localises to the cytoplasm. Its function is as follows. Single strand-specific metallo-endoribonuclease involved in late-stage 70S ribosome quality control and in maturation of the 3' terminus of the 16S rRNA. The protein is Endoribonuclease YbeY of Bartonella henselae (strain ATCC 49882 / DSM 28221 / CCUG 30454 / Houston 1) (Rochalimaea henselae).